A 469-amino-acid chain; its full sequence is Glutamate--tRNA ligase (469 aa).

Positions 9-19 (PSPTGFLHVGG) match the 'HIGH' region motif. 4 residues coordinate Zn(2+): C98, C100, C125, and D127. A 'KMSKS' region motif is present at residues 236–240 (KLSKR). Residue K239 coordinates ATP.

It belongs to the class-I aminoacyl-tRNA synthetase family. Glutamate--tRNA ligase type 1 subfamily. In terms of assembly, monomer. Zn(2+) serves as cofactor.

The protein localises to the cytoplasm. The catalysed reaction is tRNA(Glu) + L-glutamate + ATP = L-glutamyl-tRNA(Glu) + AMP + diphosphate. Catalyzes the attachment of glutamate to tRNA(Glu) in a two-step reaction: glutamate is first activated by ATP to form Glu-AMP and then transferred to the acceptor end of tRNA(Glu). The polypeptide is Glutamate--tRNA ligase (Shewanella sediminis (strain HAW-EB3)).